The primary structure comprises 138 residues: Large ribosomal subunit protein bL17 (138 aa).

The protein belongs to the bacterial ribosomal protein bL17 family. In terms of assembly, part of the 50S ribosomal subunit. Contacts protein L32.

The chain is Large ribosomal subunit protein bL17 from Methylorubrum extorquens (strain CM4 / NCIMB 13688) (Methylobacterium extorquens).